Here is a 304-residue protein sequence, read N- to C-terminus: Phosphatidylglycerol--prolipoprotein diacylglyceryl transferase (304 aa).

Transmembrane regions (helical) follow at residues 18–38 (LGPF…LIGL), 58–78 (LLPI…VAFE), 106–126 (IWGG…AVLI), and 133–153 (QAFW…QAIG). A 1,2-diacyl-sn-glycero-3-phospho-(1'-sn-glycerol) is bound at residue Arg154. A run of 3 helical transmembrane segments spans residues 195–215 (PTFL…IVLF), 221–241 (GLLK…YSLG), and 268–288 (IAQL…WWLY).

The protein belongs to the Lgt family.

The protein resides in the cell inner membrane. It carries out the reaction L-cysteinyl-[prolipoprotein] + a 1,2-diacyl-sn-glycero-3-phospho-(1'-sn-glycerol) = an S-1,2-diacyl-sn-glyceryl-L-cysteinyl-[prolipoprotein] + sn-glycerol 1-phosphate + H(+). The protein operates within protein modification; lipoprotein biosynthesis (diacylglyceryl transfer). Functionally, catalyzes the transfer of the diacylglyceryl group from phosphatidylglycerol to the sulfhydryl group of the N-terminal cysteine of a prolipoprotein, the first step in the formation of mature lipoproteins. The protein is Phosphatidylglycerol--prolipoprotein diacylglyceryl transferase of Prochlorococcus marinus (strain MIT 9303).